Here is a 186-residue protein sequence, read N- to C-terminus: Translation initiation factor IF-3 (186 aa).

It belongs to the IF-3 family. Monomer.

It localises to the cytoplasm. IF-3 binds to the 30S ribosomal subunit and shifts the equilibrium between 70S ribosomes and their 50S and 30S subunits in favor of the free subunits, thus enhancing the availability of 30S subunits on which protein synthesis initiation begins. This Chlamydia muridarum (strain MoPn / Nigg) protein is Translation initiation factor IF-3.